The sequence spans 236 residues: Phosphoribosylformylglycinamidine synthase subunit PurQ (236 aa).

Residues 2–234 enclose the Glutamine amidotransferase type-1 domain; sequence RFAVVTFPGS…LSVGLEVAHS (233 aa). The Nucleophile role is filled by C86. Residues H203 and E205 contribute to the active site.

In terms of assembly, part of the FGAM synthase complex composed of 1 PurL, 1 PurQ and 2 PurS subunits.

Its subcellular location is the cytoplasm. The enzyme catalyses N(2)-formyl-N(1)-(5-phospho-beta-D-ribosyl)glycinamide + L-glutamine + ATP + H2O = 2-formamido-N(1)-(5-O-phospho-beta-D-ribosyl)acetamidine + L-glutamate + ADP + phosphate + H(+). The catalysed reaction is L-glutamine + H2O = L-glutamate + NH4(+). It functions in the pathway purine metabolism; IMP biosynthesis via de novo pathway; 5-amino-1-(5-phospho-D-ribosyl)imidazole from N(2)-formyl-N(1)-(5-phospho-D-ribosyl)glycinamide: step 1/2. Functionally, part of the phosphoribosylformylglycinamidine synthase complex involved in the purines biosynthetic pathway. Catalyzes the ATP-dependent conversion of formylglycinamide ribonucleotide (FGAR) and glutamine to yield formylglycinamidine ribonucleotide (FGAM) and glutamate. The FGAM synthase complex is composed of three subunits. PurQ produces an ammonia molecule by converting glutamine to glutamate. PurL transfers the ammonia molecule to FGAR to form FGAM in an ATP-dependent manner. PurS interacts with PurQ and PurL and is thought to assist in the transfer of the ammonia molecule from PurQ to PurL. The sequence is that of Phosphoribosylformylglycinamidine synthase subunit PurQ from Thermomicrobium roseum (strain ATCC 27502 / DSM 5159 / P-2).